The chain runs to 63 residues: uncharacterized protein (63 aa).

It localises to the mitochondrion. This is an uncharacterized protein from Marchantia polymorpha (Common liverwort).